The chain runs to 85 residues: RDS3 complex subunit 10 (85 aa).

As to quaternary structure, belongs to the SF3b complex composed of CUS1, HSH49, HSH155, RCP1, RDS3 and RSE1.

Its subcellular location is the nucleus. Involved in pre-mRNA splicing. Required for the SF3b integrity and prespliceosome assembly. This is RDS3 complex subunit 10 (YSF3) from Saccharomyces cerevisiae (strain ATCC 204508 / S288c) (Baker's yeast).